Here is a 115-residue protein sequence, read N- to C-terminus: Holo-[acyl-carrier-protein] synthase (115 aa).

Mg(2+) contacts are provided by Asp6 and Glu51.

The protein belongs to the P-Pant transferase superfamily. AcpS family. It depends on Mg(2+) as a cofactor.

It localises to the cytoplasm. The enzyme catalyses apo-[ACP] + CoA = holo-[ACP] + adenosine 3',5'-bisphosphate + H(+). Its function is as follows. Transfers the 4'-phosphopantetheine moiety from coenzyme A to a Ser of acyl-carrier-protein. This chain is Holo-[acyl-carrier-protein] synthase, found in Campylobacter jejuni subsp. jejuni serotype O:2 (strain ATCC 700819 / NCTC 11168).